Consider the following 389-residue polypeptide: Acetyl-CoA decarbonylase/synthase complex subunit delta (389 aa).

It belongs to the CdhD family. As to quaternary structure, heterodimer of delta and gamma chains. The ACDS complex is made up of alpha, epsilon, beta, gamma and delta chains with a probable stoichiometry of (alpha(2)epsilon(2))(4)-beta(8)-(gamma(1)delta(1))(8).

Part of a complex that catalyzes the reversible cleavage of acetyl-CoA, allowing autotrophic growth from CO(2). Probably maintains the overall quaternary structure of the ACDS complex. In Methanothermobacter thermautotrophicus (strain ATCC 29096 / DSM 1053 / JCM 10044 / NBRC 100330 / Delta H) (Methanobacterium thermoautotrophicum), this protein is Acetyl-CoA decarbonylase/synthase complex subunit delta.